A 111-amino-acid chain; its full sequence is Flagellar hook-basal body complex protein FliE (111 aa).

It belongs to the FliE family.

It localises to the bacterial flagellum basal body. The sequence is that of Flagellar hook-basal body complex protein FliE from Brucella abortus (strain S19).